A 328-amino-acid polypeptide reads, in one-letter code: Small ribosomal subunit protein bS1A (328 aa).

S1 motif domains follow at residues 31 to 100 (GDIV…LSIR), 118 to 182 (DATV…LSHR), and 196 to 264 (AQVV…LSTK). The segment at 298–328 (EAQGIPYEPPTSVDDTDDEEDESLAVSAVDE) is disordered. Over residues 311–328 (DDTDDEEDESLAVSAVDE) the composition is skewed to acidic residues.

Belongs to the bacterial ribosomal protein bS1 family.

Functionally, binds mRNA. This is Small ribosomal subunit protein bS1A (rps1A) from Synechocystis sp. (strain ATCC 27184 / PCC 6803 / Kazusa).